The primary structure comprises 418 residues: E3 ubiquitin-protein ligase pellino homolog 1 (418 aa).

One can recognise an FHA; atypical domain in the interval 13–200; it reads APVKYGELIV…MHPRNGFTED (188 aa). Serine 121 is modified (phosphoserine; by ATM). Phosphothreonine; by ATM is present on threonine 127. The segment at 311-399 is ring-like domain; necessary for ubiqitination of RIPK3; sequence CGHVHGYHNW…TFHAACPFCA (89 aa).

This sequence belongs to the pellino family. In terms of assembly, interacts with MAP3K7. Upon IL1B treatment, forms a complex with TRAF6, IRAK1, IRAK4 and MYD88; this complex recruits MAP3K7/TAK1, TAB1 and TAB2 to mediate NF-kappa-B activation. Direct binding of SMAD6 to PELI1 prevents the complex formation and hence negatively regulates IL1R-TLR signaling and eventually NF-kappa-B-mediated gene expression. Interacts (via atypical FHA domain) with RIPK3; preferentially binds to the 'Thr-182' phosphorylated form of RIPK3. Interacts with RIPK1 and IRAK1. Phosphorylation by IRAK1 and IRAK4 enhances its E3 ligase activity. Phosphorylated by ATM in response to DNA damage, promoting localization to DNA double-strand breaks (DSBs) and ability to mediate 'Lys-63'-linked ubiquitination of NBN. Post-translationally, sumoylated. In terms of tissue distribution, expressed at high levels in normal skin but decreased in keratinocytes from toxic epidermal necrolysis (TEN) patients (at protein level).

Its subcellular location is the chromosome. The catalysed reaction is S-ubiquitinyl-[E2 ubiquitin-conjugating enzyme]-L-cysteine + [acceptor protein]-L-lysine = [E2 ubiquitin-conjugating enzyme]-L-cysteine + N(6)-ubiquitinyl-[acceptor protein]-L-lysine.. It functions in the pathway protein modification; protein ubiquitination. E3 ubiquitin ligase catalyzing the covalent attachment of ubiquitin moieties onto substrate proteins. Involved in the TLR and IL-1 signaling pathways via interaction with the complex containing IRAK kinases and TRAF6. Acts as a positive regulator of inflammatory response in microglia through activation of NF-kappa-B and MAP kinase. Mediates 'Lys-63'-linked polyubiquitination of IRAK1 allowing subsequent NF-kappa-B activation. Conjugates 'Lys-63'-linked ubiquitin chains to the adapter protein ASC/PYCARD, which in turn is crucial for NLRP3 inflammasome activation. Mediates 'Lys-48'-linked polyubiquitination of RIPK3 leading to its subsequent proteasome-dependent degradation; preferentially recognizes and mediates the degradation of the 'Thr-182' phosphorylated form of RIPK3. Negatively regulates necroptosis by reducing RIPK3 expression. Mediates 'Lys-63'-linked ubiquitination of RIPK1. Following phosphorylation by ATM, catalyzes 'Lys-63'-linked ubiquitination of NBN, promoting DNA repair via homologous recombination. Negatively regulates activation of the metabolic mTORC1 signaling pathway by mediating 'Lys-63'-linked ubiquitination of mTORC1-inhibitory protein TSC1 and thereby promoting TSC1/TSC2 complex stability. In Homo sapiens (Human), this protein is E3 ubiquitin-protein ligase pellino homolog 1.